Reading from the N-terminus, the 406-residue chain is Acetylornithine/succinyldiaminopimelate aminotransferase (406 aa).

Residues G108–T109 and F141 each bind pyridoxal 5'-phosphate. R144 contributes to the N(2)-acetyl-L-ornithine binding site. Position 226–229 (D226–Q229) interacts with pyridoxal 5'-phosphate. N6-(pyridoxal phosphate)lysine is present on K255. S283 is a N(2)-acetyl-L-ornithine binding site. Pyridoxal 5'-phosphate is bound at residue T284.

It belongs to the class-III pyridoxal-phosphate-dependent aminotransferase family. ArgD subfamily. In terms of assembly, homodimer. Pyridoxal 5'-phosphate is required as a cofactor.

The protein resides in the cytoplasm. It carries out the reaction N(2)-acetyl-L-ornithine + 2-oxoglutarate = N-acetyl-L-glutamate 5-semialdehyde + L-glutamate. It catalyses the reaction N-succinyl-(2S,6S)-2,6-diaminopimelate + 2-oxoglutarate = (S)-2-succinylamino-6-oxoheptanedioate + L-glutamate. It functions in the pathway amino-acid biosynthesis; L-arginine biosynthesis; N(2)-acetyl-L-ornithine from L-glutamate: step 4/4. It participates in amino-acid biosynthesis; L-lysine biosynthesis via DAP pathway; LL-2,6-diaminopimelate from (S)-tetrahydrodipicolinate (succinylase route): step 2/3. In terms of biological role, involved in both the arginine and lysine biosynthetic pathways. The sequence is that of Acetylornithine/succinyldiaminopimelate aminotransferase from Escherichia coli O6:H1 (strain CFT073 / ATCC 700928 / UPEC).